The primary structure comprises 647 residues: Zinc finger CCCH domain-containing protein 19 (647 aa).

C3H1-type zinc fingers lie at residues 16 to 45 (RRRSTDCIYFLASPLTCKKGSECEYRHSDA) and 47 to 73 (RMNPRDCWYWFNGNCANPKCSFRHPPL). The tract at residues 78–106 (GAPTTPRTSQQSAPQVSVPAQAPVPNPAS) is disordered. The segment covering 86-106 (SQQSAPQVSVPAQAPVPNPAS) has biased composition (low complexity). The C3H1-type 3 zinc finger occupies 109–136 (AKQGVPCYYFQKGMCVKGDRCAFLHLPQ). 5 disordered regions span residues 155-280 (VPHP…RTNG), 308-327 (LSESRFSQREPMPLTADSSD), 335-452 (QRRL…DAES), 512-580 (LKRK…LSPA), and 586-605 (EAADDASRELEEQQDVETAE). Composition is skewed to polar residues over residues 160-175 (LKNSWTKPNSSAQQNA) and 189-203 (NGKTAQKQNLTNRAG). A compositionally biased stretch (basic and acidic residues) spans 267 to 280 (SLREDRGAYRRTNG). The span at 347–359 (SDRHNVYPEDERH) shows a compositional bias: basic and acidic residues. Positions 369–379 (QASNDGVSSSR) are enriched in polar residues. The span at 419-433 (LRGKLHDRLKAKPNE) shows a compositional bias: basic and acidic residues. A compositionally biased stretch (polar residues) spans 435–445 (VSGNVQSSLSK). Basic and acidic residues predominate over residues 527–536 (GSKREEHSGG).

In Oryza sativa subsp. japonica (Rice), this protein is Zinc finger CCCH domain-containing protein 19.